The sequence spans 315 residues: MSHSLRIIFAGTPDFAARHLEALLASDHQIVGVFTQPDRPSGRGNKLTPSPVKALALQHDLPVFQPASLRPEENQRLVASLQADVMVVVAYGLILPQAVLDMPRLGCVNVHGSLLPRWRGAAPIQRALWAGDSETGVTIMQMDAGLDTGDMLLKLSCLITQDDTSATLYDKLSALGPQGLLTTLAQLADGRAQAQQQDDALACYAEKLSKEEARLDWQLPAEQLARCVRAFNPWPVSFFMLEGQPVKVWGANVLHQESDAQPGTIVGADKQGIAVATAQGILLLTQLQPAGKKSMAARDLLNSRKESFLAGTLLD.

113–116 (SLLP) is a binding site for (6S)-5,6,7,8-tetrahydrofolate.

The protein belongs to the Fmt family.

It catalyses the reaction L-methionyl-tRNA(fMet) + (6R)-10-formyltetrahydrofolate = N-formyl-L-methionyl-tRNA(fMet) + (6S)-5,6,7,8-tetrahydrofolate + H(+). Its function is as follows. Attaches a formyl group to the free amino group of methionyl-tRNA(fMet). The formyl group appears to play a dual role in the initiator identity of N-formylmethionyl-tRNA by promoting its recognition by IF2 and preventing the misappropriation of this tRNA by the elongation apparatus. In Edwardsiella ictaluri (strain 93-146), this protein is Methionyl-tRNA formyltransferase.